A 423-amino-acid polypeptide reads, in one-letter code: Serine--tRNA ligase (423 aa).

230–232 (TAE) is a binding site for L-serine. 261 to 263 (RSE) contacts ATP. Glu284 lines the L-serine pocket. Position 348-351 (348-351 (EISS)) interacts with ATP. Residue Ser384 participates in L-serine binding.

This sequence belongs to the class-II aminoacyl-tRNA synthetase family. Type-1 seryl-tRNA synthetase subfamily. Homodimer. The tRNA molecule binds across the dimer.

It localises to the cytoplasm. The enzyme catalyses tRNA(Ser) + L-serine + ATP = L-seryl-tRNA(Ser) + AMP + diphosphate + H(+). It catalyses the reaction tRNA(Sec) + L-serine + ATP = L-seryl-tRNA(Sec) + AMP + diphosphate + H(+). The protein operates within aminoacyl-tRNA biosynthesis; selenocysteinyl-tRNA(Sec) biosynthesis; L-seryl-tRNA(Sec) from L-serine and tRNA(Sec): step 1/1. Functionally, catalyzes the attachment of serine to tRNA(Ser). Is also able to aminoacylate tRNA(Sec) with serine, to form the misacylated tRNA L-seryl-tRNA(Sec), which will be further converted into selenocysteinyl-tRNA(Sec). This chain is Serine--tRNA ligase, found in Syntrophobacter fumaroxidans (strain DSM 10017 / MPOB).